Reading from the N-terminus, the 56-residue chain is Ovomucoid (56 aa).

Residues 6–56 (VDCSEYPKPACTLEYRPLCGSDNKTYGNKCNFCNAVVESNGTLTLSHFGKC) enclose the Kazal-like domain. 3 cysteine pairs are disulfide-bonded: cysteine 8/cysteine 38, cysteine 16/cysteine 35, and cysteine 24/cysteine 56. Asparagine 45 carries an N-linked (GlcNAc...) asparagine glycan.

Its subcellular location is the secreted. The protein is Ovomucoid of Meleagris ocellata (Ocellated turkey).